The following is a 933-amino-acid chain: uncharacterized protein (933 aa).

Residues 244–255 (KKDIGAKPKPVD) show a composition bias toward basic and acidic residues. Disordered regions lie at residues 244–277 (KKDI…ELPD) and 343–364 (SAPH…EWKG). Over residues 343–353 (SAPHQPSSQHA) the composition is skewed to polar residues. Residues 771-791 (VIHGMVLMFAGGKLLFGGCVL) traverse the membrane as a helical segment. The segment covering 890–907 (DKIEKEPPPSPEKVKPPE) has biased composition (basic and acidic residues). The interval 890–933 (DKIEKEPPPSPEKVKPPEIELQPFTKMRRSSKKTAGFKKLNSKK) is disordered. The span at 915–933 (KMRRSSKKTAGFKKLNSKK) shows a compositional bias: basic residues.

It is found in the membrane. This is an uncharacterized protein from Mus musculus (Mouse).